An 86-amino-acid polypeptide reads, in one-letter code: Small ribosomal subunit protein bS20 (86 aa).

Residues 1 to 11 are compositionally biased toward basic residues; sequence MANIKQQKKRN. Positions 1-21 are disordered; the sequence is MANIKQQKKRNKTNEKRRLQN.

It belongs to the bacterial ribosomal protein bS20 family.

Functionally, binds directly to 16S ribosomal RNA. In Onion yellows phytoplasma (strain OY-M), this protein is Small ribosomal subunit protein bS20.